A 468-amino-acid chain; its full sequence is Probable Xaa-Pro aminopeptidase pepP (468 aa).

Mn(2+)-binding residues include Asp-264, Asp-275, Glu-398, and Glu-438.

The protein belongs to the peptidase M24B family. Mn(2+) is required as a cofactor.

The enzyme catalyses Release of any N-terminal amino acid, including proline, that is linked to proline, even from a dipeptide or tripeptide.. Its function is as follows. Catalyzes the removal of a penultimate prolyl residue from the N-termini of peptides. This chain is Probable Xaa-Pro aminopeptidase pepP (pepP), found in Talaromyces stipitatus (strain ATCC 10500 / CBS 375.48 / QM 6759 / NRRL 1006) (Penicillium stipitatum).